Reading from the N-terminus, the 429-residue chain is Enolase (429 aa).

Position 163 (Gln163) interacts with (2R)-2-phosphoglycerate. The active-site Proton donor is the Glu205. Mg(2+) contacts are provided by Asp242, Glu285, and Asp312. (2R)-2-phosphoglycerate contacts are provided by Lys337, Arg366, Ser367, and Lys388. Lys337 (proton acceptor) is an active-site residue.

Belongs to the enolase family. Mg(2+) is required as a cofactor.

It localises to the cytoplasm. The protein localises to the secreted. The protein resides in the cell surface. It catalyses the reaction (2R)-2-phosphoglycerate = phosphoenolpyruvate + H2O. Its pathway is carbohydrate degradation; glycolysis; pyruvate from D-glyceraldehyde 3-phosphate: step 4/5. Functionally, catalyzes the reversible conversion of 2-phosphoglycerate (2-PG) into phosphoenolpyruvate (PEP). It is essential for the degradation of carbohydrates via glycolysis. The chain is Enolase from Methylorubrum extorquens (strain PA1) (Methylobacterium extorquens).